The chain runs to 269 residues: Cytolethal distending toxin subunit B (269 aa).

The first 18 residues, 1-18 (MKKYIISLIVFLSFYAQA), serve as a signal peptide directing secretion. A Nuclear localization signal motif is present at residues 195 to 210 (REPADLEMNLTVPVRR).

As to quaternary structure, heterotrimer of 3 subunits, CdtA, CdtB and CdtC.

It localises to the secreted. Functionally, part of the tripartite complex that is required for the CDT activity. CdtB exhibits a DNA-nicking endonuclease activity, and very probably causes DNA damage in intoxicated cells. This damage induces G2/M cell cycle arrest, chromatin fragmentation, cell distention and nucleus enlargement. This chain is Cytolethal distending toxin subunit B (cdtB), found in Escherichia coli.